The primary structure comprises 381 residues: Nitric oxide reductase FlRd-NAD(+) reductase (381 aa).

It belongs to the FAD-dependent oxidoreductase family. It depends on FAD as a cofactor.

It localises to the cytoplasm. The enzyme catalyses 2 reduced [nitric oxide reductase rubredoxin domain] + NAD(+) + H(+) = 2 oxidized [nitric oxide reductase rubredoxin domain] + NADH. It functions in the pathway nitrogen metabolism; nitric oxide reduction. Functionally, one of at least two accessory proteins for anaerobic nitric oxide (NO) reductase. Reduces the rubredoxin moiety of NO reductase. The chain is Nitric oxide reductase FlRd-NAD(+) reductase from Aliivibrio fischeri (strain ATCC 700601 / ES114) (Vibrio fischeri).